The primary structure comprises 224 residues: uncharacterized protein (224 aa).

Residues 2-221 form the ABC transporter domain; it reads IEAKNVWKIY…KLRDGEIVEI (220 aa). 38–45 is a binding site for ATP; sequence GPSGCGKS.

Belongs to the ABC transporter superfamily.

This is an uncharacterized protein from Methanocaldococcus jannaschii (strain ATCC 43067 / DSM 2661 / JAL-1 / JCM 10045 / NBRC 100440) (Methanococcus jannaschii).